Reading from the N-terminus, the 716-residue chain is Macrophage-expressed gene 1 protein (716 aa).

The signal sequence occupies residues 1–20; sequence MNNFRATILFWAVAAWVTSG. Positions 30-345 constitute an MACPF domain; it reads GVQKCKNALK…TAVKRYYTFN (316 aa). A disulfide bridge links Cys-34 with Cys-70. The next 2 membrane-spanning stretches (beta stranded) occupy residues 113–120 and 127–132; these read YSINTELS and GKFSTE. 2 N-linked (GlcNAc...) asparagine glycosylation sites follow: Asn-168 and Asn-185. A run of 2 beta stranded transmembrane segments spans residues 235–244 and 248–256; these read AVTASAGLAF and VNFKFEENY. Residue Asn-269 is glycosylated (N-linked (GlcNAc...) asparagine). A disulfide bridge links Cys-350 with Cys-369. N-linked (GlcNAc...) asparagine glycosylation occurs at Asn-375. Cystine bridges form between Cys-385-Cys-397, Cys-435-Cys-449, Cys-439-Cys-445, Cys-534-Cys-572, and Cys-557-Cys-577. The P2 stretch occupies residues 413 to 656; it reads PSGYSPVRLL…GDGGGLSGGA (244 aa). Residues 656 to 676 traverse the membrane as a helical segment; that stretch reads AAAGVTLGVTTILAVVITLAI. The disordered stretch occupies residues 693–716; sequence RQSLVPGTAATGDTTYQEQGQSPA. The segment covering 703–716 has biased composition (polar residues); the sequence is TGDTTYQEQGQSPA.

The protein belongs to the MPEG1 family. In terms of assembly, homooligomer; predominantly forms a homooligomeric arc-shaped pore complex instead of complete rings of 16 subunits. In terms of processing, proteolytically processed in two steps to generate the Macrophage-expressed gene 1 protein, processed form: cleaved by trypsin in proximity of the helical transmembrane domain releases the ectodomain into the lysosomal lumen to orient the pore-forming domain toward the endogenous membranes, and processed by the asparagine endopeptidase (LGMN). Proteolytic processing in antigen-containing vesicles is pH-dependent. Post-translationally, monoubiquitinated in response to bacterial infection; ubiquitination is required for vesicular localization and antibacterial activity and can be blocked by bacterial cell cycle inhibiting factor (cif).

The protein localises to the cytoplasmic vesicle membrane. It is found in the cytoplasmic vesicle. Its subcellular location is the phagosome membrane. Forms arc- and ring-shaped pre-pores on top of the membrane at neutral to slightly acidic pH conditions and converts to pores upon acidification. Undergoes transition from the pre-pore to the pore in a processive clockwise hand-over-hand process. In the pore state, 2 alpha-helical regions refold into transmembrane hairpins (TMH1 and TMH2) in each protomer that form in the ensemble complex giant beta-barrel transmembrane pores. Functionally, pore-forming protein involved in both innate and adaptive immunity. Plays a central role in antigen cross-presentation in dendritic cells by forming a pore in antigen-containing compartments, thereby promoting delivery of antigens for cross-presentation. Also involved in innate immune response following bacterial infection; shows antibacterial activity against a wide spectrum of Gram-positive, Gram-negative and acid-fast bacteria. Reduces the viability of the intracytosolic pathogen L.monocytogenes by inhibiting acidification of the phagocytic vacuole of host cells which restricts bacterial translocation from the vacuole to the cytosol. Required for the antibacterial activity of reactive oxygen species and nitric oxide. In terms of biological role, pore-forming protein that plays a central role in antigen cross-presentation in dendritic cells by mediating delivery of antigens for cross-presentation. Dendritic cells bridge innate and adaptive immunity by capturing exogenous antigens on MHC class-I molecules and presenting them to naive CD8(+) T-cells. Acts by forming a pore in antigen-containing compartments, promoting the release of antigens into the cytosol, enabling generation of MHCI:peptide complexes and T-cell priming. This Pongo abelii (Sumatran orangutan) protein is Macrophage-expressed gene 1 protein (MPEG1).